The sequence spans 138 residues: ATP synthase epsilon chain (138 aa).

It belongs to the ATPase epsilon chain family. In terms of assembly, F-type ATPases have 2 components, CF(1) - the catalytic core - and CF(0) - the membrane proton channel. CF(1) has five subunits: alpha(3), beta(3), gamma(1), delta(1), epsilon(1). CF(0) has three main subunits: a, b and c.

It is found in the cell inner membrane. In terms of biological role, produces ATP from ADP in the presence of a proton gradient across the membrane. This chain is ATP synthase epsilon chain, found in Psychrobacter cryohalolentis (strain ATCC BAA-1226 / DSM 17306 / VKM B-2378 / K5).